A 403-amino-acid polypeptide reads, in one-letter code: Argininosuccinate synthase (403 aa).

Residue 10–18 (AYSGGLDTS) participates in ATP binding. Residue Tyr-87 coordinates L-citrulline. Residue Gly-117 coordinates ATP. Thr-119, Asn-123, and Asp-124 together coordinate L-aspartate. Residue Asn-123 participates in L-citrulline binding. The L-citrulline site is built by Arg-127, Ser-175, Ser-184, Glu-260, and Tyr-272.

The protein belongs to the argininosuccinate synthase family. Type 1 subfamily. As to quaternary structure, homotetramer.

It is found in the cytoplasm. The catalysed reaction is L-citrulline + L-aspartate + ATP = 2-(N(omega)-L-arginino)succinate + AMP + diphosphate + H(+). It functions in the pathway amino-acid biosynthesis; L-arginine biosynthesis; L-arginine from L-ornithine and carbamoyl phosphate: step 2/3. In Bacillus licheniformis (strain ATCC 14580 / DSM 13 / JCM 2505 / CCUG 7422 / NBRC 12200 / NCIMB 9375 / NCTC 10341 / NRRL NRS-1264 / Gibson 46), this protein is Argininosuccinate synthase.